The primary structure comprises 454 residues: Trigger factor (454 aa).

The 93-residue stretch at 169–261 folds into the PPIase FKBP-type domain; sequence GDVAIADYEG…LKELKSRELP (93 aa).

Belongs to the FKBP-type PPIase family. Tig subfamily.

It is found in the cytoplasm. The enzyme catalyses [protein]-peptidylproline (omega=180) = [protein]-peptidylproline (omega=0). Functionally, involved in protein export. Acts as a chaperone by maintaining the newly synthesized protein in an open conformation. Functions as a peptidyl-prolyl cis-trans isomerase. In Picosynechococcus sp. (strain ATCC 27264 / PCC 7002 / PR-6) (Agmenellum quadruplicatum), this protein is Trigger factor.